Consider the following 301-residue polypeptide: Hydroxymycolate synthase MmaA4 (301 aa).

Residues 42–43, 81–83, 103–108, 132–133, and Ile-145 each bind S-adenosyl-L-methionine; these read YS, GCG, TLSKNQ, and WE. Cys-278 is a catalytic residue.

The protein belongs to the CFA/CMAS family. Monomer.

It participates in lipid metabolism; mycolic acid biosynthesis. Functionally, involved in the biosynthesis of hydroxymycolate, a common precursor of oxygenated mycolic acids (methoxymycolate and ketomycolate). Probably transfers a methyl group from the S-adenosylmethionine (SAM) cofactor and, subsequently or simultaneously, a water molecule onto the double bound of ethylene substrates, leading to the formation of the hydroxylated product at the distal position. This is Hydroxymycolate synthase MmaA4 (cmaA) from Mycobacterium bovis (strain ATCC BAA-935 / AF2122/97).